The primary structure comprises 43 residues: Protein PsbN (43 aa).

The chain crosses the membrane as a helical span at residues 7-27; that stretch reads VAIFISGLLVSFTGYALYTAF.

This sequence belongs to the PsbN family.

The protein localises to the plastid. It localises to the chloroplast thylakoid membrane. Functionally, may play a role in photosystem I and II biogenesis. This Daucus carota (Wild carrot) protein is Protein PsbN.